Reading from the N-terminus, the 641-residue chain is Bifunctional protein glk (641 aa).

Residues 1-340 form a glucokinase region; the sequence is MSTGAQTKAA…QLSNRTGGAS (340 aa). ATP is bound at residue 23 to 28; the sequence is ADVGGT. In terms of domain architecture, HTH rpiR-type spans 341 to 417; that stretch reads SAVFERIRQM…LKLATGLTGT (77 aa). Positions 341-641 are putative HTH-type transcriptional regulator; it reads SAVFERIRQM…SHGAAPAAKD (301 aa). A DNA-binding region (H-T-H motif) is located at residues 377–396; the sequence is IVNIARKADVSQPTVIRFCR. The 140-residue stretch at 461-600 folds into the SIS domain; it reads AIDILNNARR…AVGVAIRRAA (140 aa). A helical membrane pass occupies residues 576–596; that stretch reads SMISRILHLVMIDILAVGVAI.

This sequence in the N-terminal section; belongs to the bacterial glucokinase family.

It is found in the membrane. The enzyme catalyses D-glucose + ATP = D-glucose 6-phosphate + ADP + H(+). In Burkholderia mallei (strain ATCC 23344), this protein is Bifunctional protein glk (glk).